We begin with the raw amino-acid sequence, 186 residues long: Ribosome-recycling factor (186 aa).

The protein belongs to the RRF family.

It localises to the cytoplasm. Functionally, responsible for the release of ribosomes from messenger RNA at the termination of protein biosynthesis. May increase the efficiency of translation by recycling ribosomes from one round of translation to another. The protein is Ribosome-recycling factor of Chlorobium phaeobacteroides (strain BS1).